Reading from the N-terminus, the 103-residue chain is Histone H4 (103 aa).

A compositionally biased stretch (gly residues) spans M1–G14. Positions M1–R20 are disordered. An N-acetylserine modification is found at S2. N6-acetyl-N6-methyllysine; alternate is present on residues K6 and K13. Position 17 is an N6-acetyllysine (K17). Residues K17–R21 mediate DNA binding.

It belongs to the histone H4 family. The nucleosome is a histone octamer containing two molecules each of H2A, H2B, H3 and H4 assembled in one H3-H4 heterotetramer and two H2A-H2B heterodimers. The octamer wraps approximately 147 bp of DNA.

Its subcellular location is the nucleus. It localises to the chromosome. Functionally, core component of nucleosome. Nucleosomes wrap and compact DNA into chromatin, limiting DNA accessibility to the cellular machineries which require DNA as a template. Histones thereby play a central role in transcription regulation, DNA repair, DNA replication and chromosomal stability. DNA accessibility is regulated via a complex set of post-translational modifications of histones, also called histone code, and nucleosome remodeling. The protein is Histone H4 of Mytilus chilensis (Chilean blue mussel).